Reading from the N-terminus, the 165-residue chain is Putative 4-hydroxy-4-methyl-2-oxoglutarate aldolase (165 aa).

Substrate is bound by residues 80 to 83 (GGNL) and arginine 102. Residue aspartate 103 participates in a divalent metal cation binding.

Belongs to the class II aldolase/RraA-like family. In terms of assembly, homotrimer. The cofactor is a divalent metal cation.

The catalysed reaction is 4-hydroxy-4-methyl-2-oxoglutarate = 2 pyruvate. It carries out the reaction oxaloacetate + H(+) = pyruvate + CO2. Its function is as follows. Catalyzes the aldol cleavage of 4-hydroxy-4-methyl-2-oxoglutarate (HMG) into 2 molecules of pyruvate. Also contains a secondary oxaloacetate (OAA) decarboxylase activity due to the common pyruvate enolate transition state formed following C-C bond cleavage in the retro-aldol and decarboxylation reactions. The chain is Putative 4-hydroxy-4-methyl-2-oxoglutarate aldolase from Cupriavidus necator (strain ATCC 17699 / DSM 428 / KCTC 22496 / NCIMB 10442 / H16 / Stanier 337) (Ralstonia eutropha).